We begin with the raw amino-acid sequence, 97 residues long: Mitochondrial import inner membrane translocase subunit Tim8 A (97 aa).

Residues 43 to 66 (CWEKCMDKPGPKLDSRAEACFVNC) carry the Twin CX3C motif motif. Disulfide bonds link Cys43–Cys66 and Cys47–Cys62. 4 positions are modified to phosphoserine: Ser57, Ser87, Ser94, and Ser96.

This sequence belongs to the small Tim family. In terms of assembly, heterohexamer; composed of 3 copies of TIMM8A and 3 copies of TIMM13, named soluble 70 kDa complex. Associates with the TIM22 complex, whose core is composed of TIMM22. Present at high level in liver and brain, and at lower level in muscle and heart. In CNS sections, it is predominantly present in the soma and the dendritic portion of the Purkinje cells of the cerebellum, but not in the glial cells. Scattered expression also is also detected in the brain stem, olfactory bulb, substantia nigra, hippocampus and striatum (at protein level). Ubiquitously expressed.

It localises to the mitochondrion inner membrane. Functionally, mitochondrial intermembrane chaperone that participates in the import and insertion of some multi-pass transmembrane proteins into the mitochondrial inner membrane. Also required for the transfer of beta-barrel precursors from the TOM complex to the sorting and assembly machinery (SAM complex) of the outer membrane. Acts as a chaperone-like protein that protects the hydrophobic precursors from aggregation and guide them through the mitochondrial intermembrane space. The TIMM8-TIMM13 complex mediates the import of proteins such as TIMM23, SLC25A12/ARALAR1 and SLC25A13/ARALAR2, while the predominant TIMM9-TIMM10 70 kDa complex mediates the import of much more proteins. This is Mitochondrial import inner membrane translocase subunit Tim8 A (Timm8a1) from Mus musculus (Mouse).